Consider the following 82-residue polypeptide: Small ribosomal subunit protein bS16 (82 aa).

Belongs to the bacterial ribosomal protein bS16 family.

This chain is Small ribosomal subunit protein bS16, found in Natranaerobius thermophilus (strain ATCC BAA-1301 / DSM 18059 / JW/NM-WN-LF).